The following is a 442-amino-acid chain: Metacaspase-5 (442 aa).

The first 18 residues, 1-18 (MDLLLGVLSSGILQNALP), serve as a signal peptide directing secretion. Residues 19–62 (FVAGVGRVKRPKRVKLEEAFREAHLCRPVIPYRAPTPYTGGRVK) form an important for catalytic activity region. N-linked (GlcNAc...) asparagine glycans are attached at residues Asn-69 and Asn-112. The active site involves His-146. Positions 161, 177, and 178 each coordinate Ca(2+). Cys-201 is a catalytic residue. Asp-208 contacts Ca(2+). Residues Asn-234, Asn-257, Asn-282, and Asn-331 are each glycosylated (N-linked (GlcNAc...) asparagine). The tract at residues 336 to 442 (HYVPQQYLQP…QYLSGVGKPL (107 aa)) is negatively regulates catalytic activity. The span at 348–371 (PPQPYYPPPQPQQPYYPPPQPQQP) shows a compositional bias: pro residues. Positions 348 to 442 (PPQPYYPPPQ…QYLSGVGKPL (95 aa)) are disordered. Over residues 372–382 (YYPSSQLPTQY) the composition is skewed to low complexity. Polar residues predominate over residues 422–434 (PSDQSTYYSSAQY).

This sequence belongs to the peptidase C14B family. In terms of processing, in epimastigotes, the unprocessed enzyme appears to be the main form. Auto-processing is dispensable for catalytic activity towards small oligopeptide substrates.

It localises to the recycling endosome. Its activity is regulated as follows. Activated by Ca(2+). In terms of biological role, cysteine protease that cleaves specifically after arginine or lysine residues. May play a role in apoptosis. The chain is Metacaspase-5 from Trypanosoma cruzi (strain CL Brener).